Here is a 225-residue protein sequence, read N- to C-terminus: E3 ubiquitin-protein ligase ATL76 (225 aa).

A helical membrane pass occupies residues 59–79 (LMLLSVLICGIICCLGLHYII). Residues 135-177 (CVICLSDFVSGEQLRLLPKCNHGFHVRCIDKWLQHHLTCPKCR) form an RING-type; atypical zinc finger.

The protein belongs to the RING-type zinc finger family. ATL subfamily.

The protein localises to the membrane. The catalysed reaction is S-ubiquitinyl-[E2 ubiquitin-conjugating enzyme]-L-cysteine + [acceptor protein]-L-lysine = [E2 ubiquitin-conjugating enzyme]-L-cysteine + N(6)-ubiquitinyl-[acceptor protein]-L-lysine.. The protein operates within protein modification; protein ubiquitination. Its function is as follows. E3 ubiquitin-protein ligase able to catalyze polyubiquitination with ubiquitin-conjugating enzyme E2 UBC8 in vitro. This Arabidopsis thaliana (Mouse-ear cress) protein is E3 ubiquitin-protein ligase ATL76 (ATL76).